A 216-amino-acid polypeptide reads, in one-letter code: Pyrrolidone-carboxylate peptidase (216 aa).

Catalysis depends on residues glutamate 80, cysteine 143, and histidine 168.

The protein belongs to the peptidase C15 family. As to quaternary structure, homotetramer.

The protein resides in the cytoplasm. It catalyses the reaction Release of an N-terminal pyroglutamyl group from a polypeptide, the second amino acid generally not being Pro.. Removes 5-oxoproline from various penultimate amino acid residues except L-proline. The sequence is that of Pyrrolidone-carboxylate peptidase from Cupriavidus taiwanensis (strain DSM 17343 / BCRC 17206 / CCUG 44338 / CIP 107171 / LMG 19424 / R1) (Ralstonia taiwanensis (strain LMG 19424)).